A 393-amino-acid polypeptide reads, in one-letter code: MWLLIIACAVILVIGILEKRRHQKNIDALPVRVNINGIRGKSTVTRLTTGILIEAGYKTVGKTTGTDARMIYWDTPEEKPIKRKPQGPNIGEQKEVMRETVERGANAIVSECMAVNPDYQIIFQEELLQANIGVIVNVLEDHMDVMGPTLDEIAEAFTATIPYNGHLVITDSEYTEFFKQKAKERNTKVIIADNSKITDEYLRKFEYMVFPDNASLALGVAQALGIDEETAFKGMLNAPPDPGAMRILPLISPSEPGHFVNGFAANDASSTLNIWKRVKEIGYPTDDPIIIMNCRADRVDRTQQFANDVLPYIEASELILIGETTEPIVKAYEEGKIPADKLHDLEYKSTDEIMELLKKRMHNRVIYGVGNIHGAAEPLIEKIHEYKVKQLVS.

It depends on Mn(2+) as a cofactor.

In terms of biological role, catalyzes the biosynthesis of PGA (gamma-polyglutamic acid) from L-glutamate. Both the 44-kDa and the 33-kDa forms are required for PGA synthesis. The protein is PGA synthase CapB (capB) of Bacillus subtilis (strain 168).